The sequence spans 151 residues: UPF0208 membrane protein Ent638_2839 (151 aa).

A run of 2 helical transmembrane segments spans residues 46-65 (YAIR…QIAL) and 69-91 (LGPA…WWLG).

Belongs to the UPF0208 family.

The protein localises to the cell inner membrane. This chain is UPF0208 membrane protein Ent638_2839, found in Enterobacter sp. (strain 638).